The sequence spans 668 residues: NADH-ubiquinone oxidoreductase chain 5 (668 aa).

18 consecutive transmembrane segments (helical) span residues 1 to 21, 31 to 51, 81 to 101, 111 to 131, 133 to 153, 178 to 198, 211 to 231, 251 to 271, 283 to 303, 311 to 331, 339 to 359, 375 to 395, 421 to 441, 462 to 482, 519 to 539, 566 to 586, 629 to 649, and 650 to 668; these read MYIINLILPLIGSIITGLFGH, IAVGCMMLTALSSLYIGYEIL, LTSIMIIVITCISSMVHLYSM, TRFFSYLSLFTFFMMLLVTAD, FVQLFFGWEGVGIMSYLLINF, LFFGILLVFLVFKSVDFSVIF, LLGYEVNAITLIGSFIVIGVV, TPVSALLHAATMVTAGVFLVL, ILNILTIIGALTTLFATTIGI, VIAYSTCSQLGYMIFACGLLN, LTTHAFFKALLFLSAGSVIHG, LMPLTYQCMLIGTLALTGFPF, AIIGYVAAFGTTFYSFRLLIL, TNMVIPLVILAICSIFIGYLT, LLPLFAFIYGVLTPVLFYFNL, FDFLSRVLIAVPFFHLSYDVM, IVQAILLIIFVGIFSFMIGFL, and YVELFVILGALYLCLPKIK.

Belongs to the complex I subunit 5 family.

The protein localises to the mitochondrion inner membrane. The enzyme catalyses a ubiquinone + NADH + 5 H(+)(in) = a ubiquinol + NAD(+) + 4 H(+)(out). Functionally, core subunit of the mitochondrial membrane respiratory chain NADH dehydrogenase (Complex I) that is believed to belong to the minimal assembly required for catalysis. Complex I functions in the transfer of electrons from NADH to the respiratory chain. The immediate electron acceptor for the enzyme is believed to be ubiquinone. The chain is NADH-ubiquinone oxidoreductase chain 5 (nad5) from Dictyostelium citrinum (Slime mold).